The primary structure comprises 363 residues: Dihydroorotate dehydrogenase (quinone) (363 aa).

FMN contacts are provided by residues 62–66 (AGYDK) and threonine 86. Residue lysine 66 participates in substrate binding. 111–115 (NRLGF) is a substrate binding site. Residues asparagine 139 and asparagine 170 each contribute to the FMN site. Asparagine 170 is a substrate binding site. Catalysis depends on serine 173, which acts as the Nucleophile. Asparagine 175 contributes to the substrate binding site. FMN contacts are provided by lysine 215 and serine 243. Substrate is bound at residue 244–245 (NT). FMN contacts are provided by residues glycine 266, glycine 295, and 316 to 317 (YS).

Belongs to the dihydroorotate dehydrogenase family. Type 2 subfamily. In terms of assembly, monomer. Requires FMN as cofactor.

The protein resides in the cell membrane. It carries out the reaction (S)-dihydroorotate + a quinone = orotate + a quinol. Its pathway is pyrimidine metabolism; UMP biosynthesis via de novo pathway; orotate from (S)-dihydroorotate (quinone route): step 1/1. Catalyzes the conversion of dihydroorotate to orotate with quinone as electron acceptor. This is Dihydroorotate dehydrogenase (quinone) from Agrobacterium fabrum (strain C58 / ATCC 33970) (Agrobacterium tumefaciens (strain C58)).